The chain runs to 248 residues: Ribosomal RNA small subunit methyltransferase J (248 aa).

S-adenosyl-L-methionine contacts are provided by residues 98 to 99 (RD), 114 to 115 (ER), 150 to 151 (SS), and Asp168.

This sequence belongs to the methyltransferase superfamily. RsmJ family.

It is found in the cytoplasm. It catalyses the reaction guanosine(1516) in 16S rRNA + S-adenosyl-L-methionine = N(2)-methylguanosine(1516) in 16S rRNA + S-adenosyl-L-homocysteine + H(+). In terms of biological role, specifically methylates the guanosine in position 1516 of 16S rRNA. The chain is Ribosomal RNA small subunit methyltransferase J from Shewanella baltica (strain OS195).